A 164-amino-acid chain; its full sequence is Phosphopantetheine adenylyltransferase (164 aa).

Ser10 is a binding site for substrate. ATP contacts are provided by residues 10–11 and His18; that span reads SF. Residues Lys42, Leu74, and Arg88 each coordinate substrate. Residues 89–91, Glu99, and 124–130 contribute to the ATP site; these read GLR and YSFLSSS.

The protein belongs to the bacterial CoaD family. Homohexamer. The cofactor is Mg(2+).

It is found in the cytoplasm. The catalysed reaction is (R)-4'-phosphopantetheine + ATP + H(+) = 3'-dephospho-CoA + diphosphate. It participates in cofactor biosynthesis; coenzyme A biosynthesis; CoA from (R)-pantothenate: step 4/5. Reversibly transfers an adenylyl group from ATP to 4'-phosphopantetheine, yielding dephospho-CoA (dPCoA) and pyrophosphate. This Bacillus licheniformis (strain ATCC 14580 / DSM 13 / JCM 2505 / CCUG 7422 / NBRC 12200 / NCIMB 9375 / NCTC 10341 / NRRL NRS-1264 / Gibson 46) protein is Phosphopantetheine adenylyltransferase.